Reading from the N-terminus, the 186-residue chain is Tumor necrosis factor, alpha-induced protein 8-like protein 2 B (186 aa).

The protein belongs to the TNFAIP8 family. TNFAIP8L2 subfamily.

Its function is as follows. Acts as a negative regulator of innate and adaptive immunity by maintaining immune homeostasis. Negative regulator of Toll-like receptor and T-cell receptor function. Prevents hyperresponsiveness of the immune system and maintains immune homeostasis. Inhibits jun/ap1 and NF-kappa-B activation. Promotes Fas-induced apoptosis. The protein is Tumor necrosis factor, alpha-induced protein 8-like protein 2 B (tnfaip8l2b) of Danio rerio (Zebrafish).